A 174-amino-acid chain; its full sequence is Adenine phosphoribosyltransferase (174 aa).

This sequence belongs to the purine/pyrimidine phosphoribosyltransferase family. Homodimer.

The protein resides in the cytoplasm. It catalyses the reaction AMP + diphosphate = 5-phospho-alpha-D-ribose 1-diphosphate + adenine. It participates in purine metabolism; AMP biosynthesis via salvage pathway; AMP from adenine: step 1/1. Catalyzes a salvage reaction resulting in the formation of AMP, that is energically less costly than de novo synthesis. This chain is Adenine phosphoribosyltransferase, found in Nitrosomonas europaea (strain ATCC 19718 / CIP 103999 / KCTC 2705 / NBRC 14298).